The sequence spans 306 residues: Ankyrin repeat domain-containing protein 23 (306 aa).

Residues 41 to 90 are a coiled coil; it reads QEAVAREKLKLEEEKRKKLERFNSSRLTLDNLTDLENLVQRRRKKRQRHK. The segment at 78–107 is disordered; sequence LVQRRRKKRQRHKVPPREPESGAEPQPQVP. Positions 80-91 are enriched in basic residues; that stretch reads QRRRKKRQRHKV. ANK repeat units follow at residues 144–173, 177–206, 210–239, and 243–272; these read LHRTALHWACLKGHRQLVNKLLAAGAAIEV, LDRTPVFWACRGGHLDILKRLLNQGAQVNA, IWSTPLHVAVRMGHSDCLEHLIECGAHINA, and EGDTALHEAVRYGHHKATKLLLLYGAKLGV. The interaction with TTN stretch occupies residues 179–196; that stretch reads RTPVFWACRGGHLDILKR.

In terms of assembly, interacts with titin/TTN and MYPN.

The protein resides in the nucleus. Functionally, may be involved in the energy metabolism. Could be a molecular link between myofibrillar stretch-induced signaling pathways and muscle gene expression. The polypeptide is Ankyrin repeat domain-containing protein 23 (Ankrd23) (Mus musculus (Mouse)).